Here is a 1128-residue protein sequence, read N- to C-terminus: Major DNA-binding protein (1128 aa).

The tract at residues L1104–V1128 is required for nuclear localization.

This sequence belongs to the herpesviridae major DNA-binding protein family. In terms of assembly, homooligomers. Forms double-helical filaments necessary for the formation of replication compartments within the host nucleus. Interacts with the origin-binding protein. Interacts with the helicase primase complex; this interaction stimulates primer synthesis activity of the helicase-primase complex. Interacts with the DNA polymerase. Interacts with the alkaline exonuclease; this interaction increases its nuclease processivity.

It localises to the virion tegument. The protein localises to the host nucleus. Plays several crucial roles in viral infection. Participates in the opening of the viral DNA origin to initiate replication by interacting with the origin-binding protein. May disrupt loops, hairpins and other secondary structures present on ssDNA to reduce and eliminate pausing of viral DNA polymerase at specific sites during elongation. Promotes viral DNA recombination by performing strand-transfer, characterized by the ability to transfer a DNA strand from a linear duplex to a complementary single-stranded DNA circle. Can also catalyze the renaturation of complementary single strands. Additionally, reorganizes the host cell nucleus, leading to the formation of prereplicative sites and replication compartments. This process is driven by the protein which can form double-helical filaments in the absence of DNA. This Homo sapiens (Human) protein is Major DNA-binding protein.